The sequence spans 624 residues: Coagulation factor XI (624 aa).

Positions 1–18 are cleaved as a signal peptide; that stretch reads MTSLHQVLYFIFFASVSS. 4 consecutive Apple domains span residues 20–103, 110–193, 200–283, and 291–376; these read CVTK…FKQC, CSKD…LKSC, CIRD…LQHC, and CHPS…LRLC. 17 cysteine pairs are disulfide-bonded: cysteine 20–cysteine 103, cysteine 46–cysteine 76, cysteine 50–cysteine 56, cysteine 110–cysteine 193, cysteine 136–cysteine 165, cysteine 140–cysteine 146, cysteine 200–cysteine 283, cysteine 226–cysteine 255, cysteine 230–cysteine 236, cysteine 291–cysteine 376, cysteine 317–cysteine 348, cysteine 321–cysteine 327, cysteine 382–cysteine 499, cysteine 415–cysteine 431, cysteine 513–cysteine 580, cysteine 544–cysteine 559, and cysteine 570–cysteine 598. N-linked (GlcNAc...) asparagine glycans are attached at residues asparagine 90 and asparagine 126. An N-linked (GlcNAc...) asparagine glycan is attached at asparagine 297. In terms of domain architecture, Peptidase S1 spans 390–622; it reads VVGGAASVHG…YVDWILEKTQ (233 aa). Histidine 430 acts as the Charge relay system in catalysis. A glycan (N-linked (GlcNAc...) asparagine) is linked at asparagine 449. Aspartate 479 functions as the Charge relay system in the catalytic mechanism. N-linked (GlcNAc...) asparagine glycosylation is present at asparagine 490. Residue 547–550 participates in heparin binding; that stretch reads RYRR. Residue serine 574 is the Charge relay system of the active site.

This sequence belongs to the peptidase S1 family. Plasma kallikrein subfamily. In terms of assembly, homodimer; disulfide-linked. After activation the heavy and light chains are also linked by a disulfide bond. Interacts (activated) with F9 (inactive and activated) in calcium-dependent manner. Forms a heterodimer with SERPINA5. Post-translationally, activated by factor XIIa (or XII), which cleaves each polypeptide after Arg-389 into the light chain, which contains the active site, and the heavy chain, which associates with high molecular weight (HMW) kininogen. Activated by F12 (activated); the presence of negatively charged surfaces accelerates activation. Activated by F2 (thrombin); the presence of negatively charged surfaces, such as polyphosphate and dextran sulfate, strongly accelerates activation. Autoactivated; the presence of negatively charged surfaces, such as polyphosphate and dextran sulfate, accelerates autoactivation and autolysis. N-glycosylated on both chains. N-glycosylated sites mainly consist of nonfucosylated sialylated biantennary (in high abundance) and/or triantennary (in low abundance) complex structures.

It is found in the secreted. The catalysed reaction is Selective cleavage of Arg-|-Ala and Arg-|-Val bonds in factor IX to form factor IXa.. With respect to regulation, inhibited by SERPINA5. Factor XI triggers the middle phase of the intrinsic pathway of blood coagulation by activating factor IX. This is Coagulation factor XI (F11) from Mus musculus (Mouse).